Here is a 463-residue protein sequence, read N- to C-terminus: L-seryl-tRNA(Sec) selenium transferase (463 aa).

Lys-295 is subject to N6-(pyridoxal phosphate)lysine.

It belongs to the SelA family. Homodecamer; pentamer of dimers. Binds only one seryl-tRNA(Sec) per dimer. Pyridoxal 5'-phosphate is required as a cofactor.

Its subcellular location is the cytoplasm. It catalyses the reaction L-seryl-tRNA(Sec) + selenophosphate + H(+) = L-selenocysteinyl-tRNA(Sec) + phosphate. The protein operates within aminoacyl-tRNA biosynthesis; selenocysteinyl-tRNA(Sec) biosynthesis; selenocysteinyl-tRNA(Sec) from L-seryl-tRNA(Sec) (bacterial route): step 1/1. Converts seryl-tRNA(Sec) to selenocysteinyl-tRNA(Sec) required for selenoprotein biosynthesis. This Salmonella paratyphi B (strain ATCC BAA-1250 / SPB7) protein is L-seryl-tRNA(Sec) selenium transferase.